The chain runs to 84 residues: Small ribosomal subunit protein bS18A (84 aa).

It belongs to the bacterial ribosomal protein bS18 family. As to quaternary structure, part of the 30S ribosomal subunit. Forms a tight heterodimer with protein bS6.

In terms of biological role, binds as a heterodimer with protein bS6 to the central domain of the 16S rRNA, where it helps stabilize the platform of the 30S subunit. The chain is Small ribosomal subunit protein bS18A from Frankia alni (strain DSM 45986 / CECT 9034 / ACN14a).